The chain runs to 948 residues: Puromycin-sensitive aminopeptidase (948 aa).

Residues E206 and 341-345 (GAMEN) contribute to the substrate site. H377 lines the Zn(2+) pocket. The active-site Proton acceptor is E378. Positions 381 and 400 each coordinate Zn(2+).

This sequence belongs to the peptidase M1 family. Zn(2+) serves as cofactor. In terms of tissue distribution, expressed mainly in intestinal cells in the posterior part of the intestine and in amphid sensory neurons and nerve ring neurons. Expressed in neurons in the male tail. Expressed in mature spermatids (at protein level).

The protein resides in the cytoplasm. It localises to the cell cortex. It is found in the chromosome. Its subcellular location is the cytoskeleton. The protein localises to the spindle pole. It catalyses the reaction Release of an N-terminal amino acid, preferentially alanine, from a wide range of peptides, amides and arylamides.. Its activity is regulated as follows. Inhibited by chelating agent 1,10-phenanthroline, aminopeptidase inhibitors actinonin, amastatin, and leuhistin, and to a lesser extent by puromycin. Its function is as follows. Aminopeptidase. Required for the exit from meiosis, probably upstream of cyclin cyb-3. Involved in the establishment of the anterior-posterior polarity at the embryonic 1-cell stage by regulating the dynamics of sperm-donated centrosomes. Plays a role in oocyte maturation. Required for embryonic development. This chain is Puromycin-sensitive aminopeptidase, found in Caenorhabditis elegans.